Here is a 492-residue protein sequence, read N- to C-terminus: Xaa-Pro dipeptidase (492 aa).

At alanine 2 the chain carries N-acetylalanine. Serine 167 is modified (phosphoserine). Histidine 255 is a binding site for a dipeptide. Residues aspartate 276, aspartate 287, and histidine 370 each coordinate Mn(2+). Residue aspartate 287 participates in a dipeptide binding. Residues histidine 377 and arginine 398 each coordinate a dipeptide. Glutamate 412 and glutamate 452 together coordinate Mn(2+).

The protein belongs to the peptidase M24B family. Eukaryotic-type prolidase subfamily. Homodimer. Mn(2+) is required as a cofactor.

The enzyme catalyses Xaa-L-Pro dipeptide + H2O = an L-alpha-amino acid + L-proline. Dipeptidase that catalyzes the hydrolysis of dipeptides with a prolyl (Xaa-Pro) or hydroxyprolyl residue in the C-terminal position. The preferred dipeptide substrate is Gly-Pro, but other Xaa-Pro dipeptides, such as Ala-Pro, Met-Pro, Phe-Pro, Val-Pro and Leu-Pro, can be cleaved. Plays an important role in collagen metabolism because the high level of iminoacids in collagen. This chain is Xaa-Pro dipeptidase (Pepd), found in Rattus norvegicus (Rat).